A 247-amino-acid chain; its full sequence is Adiponectin (247 aa).

The first 17 residues, 1–17 (MLLLQALLFLLILPSHA), serve as a signal peptide directing secretion. O-linked (GalNAc...) threonine glycans are attached at residues Thr-23 and Thr-24. Position 36 is a 5-hydroxylysine (Lys-36). Cys-39 bears the S-(2-succinyl)cysteine mark. The segment at 44–105 (AGIPGHPGHN…GFPGTPGRKG (62 aa)) is disordered. In terms of domain architecture, Collagen-like spans 45-110 (GIPGHPGHNG…PGRKGEPGEA (66 aa)). 4-hydroxyproline is present on residues Pro-47, Pro-50, and Pro-56. Basic and acidic residues predominate over residues 58-73 (RDGRDGTPGEKGEKGD). 5-hydroxylysine; alternate is present on residues Lys-68, Lys-71, and Lys-80. Lys-68, Lys-71, and Lys-80 each carry an O-linked (Gal...) hydroxylysine; alternate glycan. Pro-94 carries the post-translational modification 4-hydroxyproline. Lys-104 carries the 5-hydroxylysine; alternate modification. The O-linked (Gal...) hydroxylysine; alternate glycan is linked to Lys-104. The C1q domain maps to 111–247 (AYVYRSAFSV…TGFLLYHDTN (137 aa)).

As to quaternary structure, homomultimer. Forms trimers, hexamers and 12- to 18-mers. The trimers (low molecular weight complexes / LMW) are assembled via non-covalent interactions of the collagen-like domains in a triple helix and hydrophobic interactions within the globular C1q domain. Several trimers can associate to form disulfide-linked hexamers (middle molecular weight complexes / MMW) and larger complexes (higher molecular weight / HMW). The HMW-complex assembly is also modulated by the degree of lysine hydroxylation and glycosylation. LMW, MMW and HMW complexes bind to HBEGF, MMW and HMW complexes bind to PDGFB, and HMW complex binds to FGF2. Interacts with CTRP9 via the C1q domain (heterotrimeric complex). In terms of processing, HMW complexes are more extensively glycosylated than smaller oligomers. Hydroxylation and glycosylation of the lysine residues within the collagen-like domain of adiponectin seem to be critically involved in regulating the formation and/or secretion of HMW complexes and consequently contribute to the insulin-sensitizing activity of adiponectin in hepatocytes. O-glycosylated. Not N-glycosylated O-linked glycans on hydroxylysine residues consist of Glc-Gal disaccharides bound to the oxygen atom of post-translationally added hydroxyl groups. O-linked glycosylation in the N-terminal is disialylated with the structure Neu5Acalpha2-&gt;8Neu5Acalpha2-&gt;3Gal. Sialylated by alpha 2,8-sialyltransferase III. Post-translationally, succination of Cys-39 by the Krebs cycle intermediate fumarate, which leads to S-(2-succinyl)cysteine residues, inhibits polymerization and secretion of adiponectin. Adiponectin is a major target for succination in both adipocytes and adipose tissue of diabetic mice. It was proposed that succination of proteins is a biomarker of mitochondrial stress and accumulation of Krebs cycle intermediates in adipose tissue in diabetes and that succination of adiponectin may contribute to the decrease in plasma adiponectin in diabetes. As to expression, synthesized exclusively by adipocytes and secreted into plasma.

It is found in the secreted. With respect to regulation, polymerization and secretion of adiponectin is inhibited by succination of cysteine residues by the Krebs cycle intermediate fumarate, which leads to S-(2-succinyl)cysteine residues. Its function is as follows. Important adipokine involved in the control of fat metabolism and insulin sensitivity, with direct anti-diabetic, anti-atherogenic and anti-inflammatory activities. Stimulates AMPK phosphorylation and activation in the liver and the skeletal muscle, enhancing glucose utilization and fatty-acid combustion. Antagonizes TNF-alpha by negatively regulating its expression in various tissues such as liver and macrophages, and also by counteracting its effects. Inhibits endothelial NF-kappa-B signaling through a cAMP-dependent pathway. May play a role in cell growth, angiogenesis and tissue remodeling by binding and sequestering various growth factors with distinct binding affinities, depending on the type of complex, LMW, MMW or HMW. In Mus musculus (Mouse), this protein is Adiponectin (Adipoq).